A 728-amino-acid polypeptide reads, in one-letter code: 1,4-alpha-glucan branching enzyme GlgB (728 aa).

D405 serves as the catalytic Nucleophile. Catalysis depends on E458, which acts as the Proton donor. The interval 686–712 is disordered; it reads YHGSNAGNAGAVQSDEHESHGRPHSLS.

The protein belongs to the glycosyl hydrolase 13 family. GlgB subfamily. Monomer.

It catalyses the reaction Transfers a segment of a (1-&gt;4)-alpha-D-glucan chain to a primary hydroxy group in a similar glucan chain.. It functions in the pathway glycan biosynthesis; glycogen biosynthesis. Catalyzes the formation of the alpha-1,6-glucosidic linkages in glycogen by scission of a 1,4-alpha-linked oligosaccharide from growing alpha-1,4-glucan chains and the subsequent attachment of the oligosaccharide to the alpha-1,6 position. The sequence is that of 1,4-alpha-glucan branching enzyme GlgB from Enterobacter sp. (strain 638).